The chain runs to 696 residues: D-(-)-3-hydroxybutyrate oligomer hydrolase (696 aa).

Residues methionine 1–asparagine 26 form the signal peptide. The active-site Charge relay system is serine 309.

It belongs to the D-(-)-3-hydroxybutyrate oligomer hydrolase family.

The protein localises to the secreted. It carries out the reaction (3R)-hydroxybutanoate dimer + H2O = 2 (R)-3-hydroxybutanoate + H(+). It participates in lipid metabolism; butanoate metabolism. Functionally, participates in the degradation of poly-3-hydroxybutyrate (PHB). It works downstream of poly(3-hydroxybutyrate) depolymerase, hydrolyzing D(-)-3-hydroxybutyrate oligomers of various length (3HB-oligomers) into 3HB-monomers. This chain is D-(-)-3-hydroxybutyrate oligomer hydrolase, found in Burkholderia cenocepacia (strain HI2424).